Reading from the N-terminus, the 213-residue chain is Nicolin-1 (213 aa).

In terms of assembly, part of the neuronal tubulin polyglutamylase complex which contains TPGS1, TPGS2, TTLL1, LRRC49 and NICN1. High expression level is found in brain, testis, liver and kidney. Weak expression in spleen, leukocytes, small intestin and colon.

It localises to the nucleus. The protein is Nicolin-1 (Nicn1) of Mus musculus (Mouse).